The sequence spans 499 residues: Probable UTP--glucose-1-phosphate uridylyltransferase (499 aa).

Residues 108–111 (LNGG), K122, Q185, and G214 contribute to the UTP site. Residue 110–111 (GG) coordinates substrate. Substrate-binding positions include H215 and 243–245 (NID). Residues D245 and K387 each contribute to the UTP site.

Belongs to the UDPGP type 1 family.

It localises to the cytoplasm. The protein resides in the nucleus. The catalysed reaction is alpha-D-glucose 1-phosphate + UTP + H(+) = UDP-alpha-D-glucose + diphosphate. In terms of biological role, plays a central role as a glucosyl donor in cellular metabolic pathways. This chain is Probable UTP--glucose-1-phosphate uridylyltransferase, found in Schizosaccharomyces pombe (strain 972 / ATCC 24843) (Fission yeast).